The primary structure comprises 473 residues: MAKEALELKNEANKFLKEGHIVQAIDLYTKAIELDSTNAILYSNRSLAHLKSEDYGLAINDASKAIECDPEYAKAYFRRATAHIAIFQPKEAVGDFRKALALAPSDPAARKKLRECEQLVKRIRFQEAIHNTEPPSPLANINIEDMDIPSDYDGVILEKQITKEFVEDMKERFCQGKKLPLKFAYSILRDLKELLEKTPSLIDIPVKGDETLVICGDTHGQYFDLLNIFKLHGPPSPTNKYLFNGDFVDRGSWSTEVAFTLYAYKLLYPDAVFINRGNHETDDMNKVYGFEGECRSKYNERTFNIFSETFSLLPLGSLISDSYLVVHGGLFSDDNVTLDQLRNIDRFSKKQPGQSGLMMEMLWTDPQPAPGRGPSKRGVGLQFGPDVSKRFCEANGLKAVIRSHEVRDQGYEVEHDGYCITVFSAPNYCDSTGNLGAVIKVKEDMELDFHQFEAVPHPNIRPMAYANGLLSGM.

3 TPR repeats span residues 5-38 (ALEL…DSTN), 40-72 (ILYS…DPEY), and 73-106 (AKAY…APSD). The segment at 159–472 (KQITKEFVED…MAYANGLLSG (314 aa)) is catalytic. Mn(2+) is bound by residues aspartate 217, histidine 219, aspartate 246, and asparagine 278. The active-site Proton donor/acceptor is histidine 279. Histidine 327 and histidine 404 together coordinate Mn(2+).

Belongs to the PPP phosphatase family. PP-5 (PP-T) subfamily. It depends on Mg(2+) as a cofactor. Mn(2+) is required as a cofactor.

It localises to the nucleus. The enzyme catalyses O-phospho-L-seryl-[protein] + H2O = L-seryl-[protein] + phosphate. It catalyses the reaction O-phospho-L-threonyl-[protein] + H2O = L-threonyl-[protein] + phosphate. Its function is as follows. Protein phosphatase that specifically binds to and dephosphorylates the molecular chaperone Hsp90. Dephosphorylation positively regulates the Hsp90 chaperone machinery. The sequence is that of Serine/threonine-protein phosphatase T (ppt1) from Schizosaccharomyces pombe (strain 972 / ATCC 24843) (Fission yeast).